The following is a 422-amino-acid chain: Ena/VASP-like protein (422 aa).

The WH1 domain maps to 4–118 (FEEFSEQSIC…NAMLFALNIM (115 aa)). Positions 120 to 135 (SQEGGPSSQRQVQNGP) are enriched in polar residues. Disordered regions lie at residues 120–139 (SQEG…SPDE) and 147–375 (VMEQ…PAGS). The residue at position 136 (S136) is a Phosphoserine. Residues 147–163 (VMEQHQQQRQESLERRT) show a composition bias toward basic and acidic residues. Low complexity predominate over residues 175–186 (PSSAASAPVSCS). Residues 187–212 (GPPPPPPPPVPPPPTGATPPPPPPLP) are compositionally biased toward pro residues. The segment at 228–248 (GLAAAIAGAKLRRVQRPEDAS) is EVH2 block A. Positions 228–419 (GLAAAIAGAK…DAIRQELSGI (192 aa)) are EVH2. The KLKR signature appears at 237–240 (KLRR). Residues 248 to 259 (SGGSSPSGTSKS) are compositionally biased toward low complexity. Phosphoserine is present on residues S252 and S265. The tract at residues 271–288 (GGLMEEMNKLLAKRRKAA) is EVH2 block B. Polar residues predominate over residues 305 to 326 (EDPSTSPSPGTRAASQPPNSSE). 8 positions are modified to phosphoserine: S310, S312, S335, S337, S347, S355, S360, and S375. A compositionally biased stretch (basic and acidic residues) spans 327-337 (AGRKPWERSNS). Residues 348–368 (RTPSVAKSPEAKSPLQSQPHS) are required for interaction with ZDHHC17. An EVH2 block C region spans residues 385–419 (DLDRMKQEILEEVVRELHKVKDEIIDAIRQELSGI). Positions 388 to 414 (RMKQEILEEVVRELHKVKDEIIDAIRQ) form a coiled coil.

The protein belongs to the Ena/VASP family. Homotetramer. Binds to the SH3 domains of ABL1, LYN and SRC. Also binds to profilin, with preference for isoform IIa of PFN2, and the WW domain of APBB1/FE65. Binds to SEMA6A. Interacts, via the Pro-rich region, with the C-terminal SH3 domain of DNMBP. Interacts with RAPH1. Binds, via the EVH1 domain, the Pro-rich domain of Listeria monocytogenes actA. Binds, via the EVH1 domain, the Pro-rich domain of ZYX. Interacts with FYB1. Interacts with ZDHHC17. Phosphorylated by PKA; phosphorylation abolishes binding to SH3 domains of ABL and SRC.

The protein localises to the cytoplasm. Its subcellular location is the cytoskeleton. It is found in the stress fiber. It localises to the cell projection. The protein resides in the lamellipodium. Ena/VASP proteins are actin-associated proteins involved in a range of processes dependent on cytoskeleton remodeling and cell polarity such as axon guidance and lamellipodial and filopodial dynamics in migrating cells. EVL enhances actin nucleation and polymerization. This Pongo abelii (Sumatran orangutan) protein is Ena/VASP-like protein (EVL).